The following is a 188-amino-acid chain: ATP synthase subunit b (188 aa).

The helical transmembrane segment at 5 to 25 threads the bilayer; sequence MLLIFMMIVMIASSAMAAEAE.

It belongs to the ATPase B chain family. F-type ATPases have 2 components, F(1) - the catalytic core - and F(0) - the membrane proton channel. F(1) has five subunits: alpha(3), beta(3), gamma(1), delta(1), epsilon(1). F(0) has three main subunits: a(1), b(2) and c(10-14). The alpha and beta chains form an alternating ring which encloses part of the gamma chain. F(1) is attached to F(0) by a central stalk formed by the gamma and epsilon chains, while a peripheral stalk is formed by the delta and b chains.

Its subcellular location is the cell inner membrane. In terms of biological role, f(1)F(0) ATP synthase produces ATP from ADP in the presence of a proton or sodium gradient. F-type ATPases consist of two structural domains, F(1) containing the extramembraneous catalytic core and F(0) containing the membrane proton channel, linked together by a central stalk and a peripheral stalk. During catalysis, ATP synthesis in the catalytic domain of F(1) is coupled via a rotary mechanism of the central stalk subunits to proton translocation. Functionally, component of the F(0) channel, it forms part of the peripheral stalk, linking F(1) to F(0). This Thermodesulfovibrio yellowstonii (strain ATCC 51303 / DSM 11347 / YP87) protein is ATP synthase subunit b.